The sequence spans 181 residues: Trafficking protein particle complex subunit 3 homolog (181 aa).

Cysteine 70 carries the S-palmitoyl cysteine lipid modification.

It belongs to the TRAPP small subunits family. BET3 subfamily. Homodimer. Part of the multisubunit TRAPP (transport protein particle) complex.

Its subcellular location is the golgi apparatus. The protein resides in the cis-Golgi network. It is found in the endoplasmic reticulum. May play a role in vesicular transport from endoplasmic reticulum to Golgi. Required for the systemic spread of the RNAi response. The chain is Trafficking protein particle complex subunit 3 homolog from Caenorhabditis briggsae.